A 502-amino-acid polypeptide reads, in one-letter code: Carbon catabolite-derepressing protein kinase (502 aa).

Residues 14 to 269 (YYLGKILGVG…IGEIRKHSWF (256 aa)) enclose the Protein kinase domain. ATP-binding positions include 20–28 (LGVGTFAKV) and K43. The active-site Proton acceptor is the D140. A Phosphothreonine; by autocatalysis modification is found at T173. The 41-residue stretch at 290–330 (MIDEDTLRDVVKLGYDKDHVCESLCNRLQNEETVAYYLLLD) folds into the UBA domain. Residues 453 to 501 (NSRLPAVIKFEIQLYKTKDDKYLLDMQRVTGPQLLFLEFCAAFLTNLRV) enclose the KA1 domain.

Belongs to the protein kinase superfamily. CAMK Ser/Thr protein kinase family. SNF1 subfamily.

The enzyme catalyses L-seryl-[protein] + ATP = O-phospho-L-seryl-[protein] + ADP + H(+). It carries out the reaction L-threonyl-[protein] + ATP = O-phospho-L-threonyl-[protein] + ADP + H(+). Functionally, essential for release from glucose repression. The chain is Carbon catabolite-derepressing protein kinase (RKIN1) from Secale cereale (Rye).